A 329-amino-acid chain; its full sequence is Beta-ribofuranosylphenol 5'-phosphate synthase (329 aa).

The protein belongs to the beta-RFA-P synthase family. Homodimer. Mg(2+) is required as a cofactor.

It catalyses the reaction 5-phospho-alpha-D-ribose 1-diphosphate + 4-hydroxybenzoate + H(+) = 4-(beta-D-ribofuranosyl)phenol 5'-phosphate + CO2 + diphosphate. It carries out the reaction 4-aminobenzoate + 5-phospho-alpha-D-ribose 1-diphosphate + H(+) = 4-(beta-D-ribofuranosyl)aminobenzene 5'-phosphate + CO2 + diphosphate. It functions in the pathway cofactor biosynthesis; 5,6,7,8-tetrahydromethanopterin biosynthesis. In terms of biological role, catalyzes the condensation of 4-hydroxybenzoate (HB) with 5-phospho-alpha-D-ribose 1-diphosphate (PRPP) to produce beta-ribofuranosylphenol 5'-phosphate (beta-RFH-P). Also catalyzes the condensation of 4-aminobenzoate (pABA) with PRPP to produce beta-ribofuranosylaminobenzene 5'-phosphate (beta-RFA-P). Only 4-hydroxybenzoate is known to be biosynthesized by methanogenic archaea, but 4-aminobenzoate can be used as substrate by growing methanogens when it is present in the growth medium. This Methanothermobacter thermautotrophicus (strain ATCC 29096 / DSM 1053 / JCM 10044 / NBRC 100330 / Delta H) (Methanobacterium thermoautotrophicum) protein is Beta-ribofuranosylphenol 5'-phosphate synthase.